The primary structure comprises 671 residues: TBC1 domain family member 15 (671 aa).

An N-acetylalanine modification is found at A2. Phosphoserine is present on residues S23, S32, S70, S205, and S257. One can recognise a Rab-GAP TBC domain in the interval 329 to 539; that stretch reads GLSHSLRKQA…RLWEVMWTEL (211 aa). S623 and S655 each carry phosphoserine. The disordered stretch occupies residues 650 to 671; that stretch reads EAKDDSPTQTLASPNACRLTPA. The residue at position 669 (T669) is a Phosphothreonine.

As to quaternary structure, interacts with non-phosphorylated form of RAB8A; phosphorylation of RAB8A at 'Thr-72' disrupts this interaction. Interacts with ARMC12. Ubiquitous, with highest expression in heart, liver and testis and lower expression in brain, spleen, lung, kidney and skeletal muscle.

The protein resides in the cytoplasm. Acts as a GTPase activating protein for RAB7A. Does not act on RAB4, RAB5 or RAB6. The protein is TBC1 domain family member 15 (Tbc1d15) of Mus musculus (Mouse).